The sequence spans 113 residues: UPF0482 protein YnfB (113 aa).

Positions 1–28 (MKITLSKRIGLLAFLLPCALALSTTVHA) are cleaved as a signal peptide.

It belongs to the UPF0482 family.

This Escherichia coli O127:H6 (strain E2348/69 / EPEC) protein is UPF0482 protein YnfB.